Consider the following 191-residue polypeptide: A-type ATP synthase subunit E 1 (191 aa).

The protein belongs to the V-ATPase E subunit family. In terms of assembly, has multiple subunits with at least A(3), B(3), C, D, E, F, H, I and proteolipid K(x).

It is found in the cell membrane. In terms of biological role, component of the A-type ATP synthase that produces ATP from ADP in the presence of a proton gradient across the membrane. The protein is A-type ATP synthase subunit E 1 of Methanospirillum hungatei JF-1 (strain ATCC 27890 / DSM 864 / NBRC 100397 / JF-1).